Reading from the N-terminus, the 464-residue chain is Clusterin-like protein 1 (464 aa).

The N-terminal stretch at 1–20 (MQPPLFVISVYLLWLKYCDS) is a signal peptide. Positions 56-109 (IKQMKIMMERREEEHAKLMKALKKCKEEKQEAQKLMNEVQERLEEEEKLCQASS) form a coiled coil. Cystine bridges form between Cys105–Cys331, Cys116–Cys323, Cys119–Cys320, Cys124–Cys313, and Cys131–Cys303. N-linked (GlcNAc...) asparagine glycosylation is found at Asn195, Asn255, Asn309, Asn349, Asn398, and Asn429.

It belongs to the clusterin family.

It localises to the secreted. The polypeptide is Clusterin-like protein 1 (Rattus norvegicus (Rat)).